The chain runs to 152 residues: 6,7-dimethyl-8-ribityllumazine synthase (152 aa).

5-amino-6-(D-ribitylamino)uracil-binding positions include Phe-22, Ala-54 to Glu-56, and Ala-78 to Ile-80. Glu-83–Thr-84 serves as a coordination point for (2S)-2-hydroxy-3-oxobutyl phosphate. His-86 acts as the Proton donor in catalysis. Phe-111 is a 5-amino-6-(D-ribitylamino)uracil binding site. Residue Arg-125 participates in (2S)-2-hydroxy-3-oxobutyl phosphate binding.

It belongs to the DMRL synthase family.

The enzyme catalyses (2S)-2-hydroxy-3-oxobutyl phosphate + 5-amino-6-(D-ribitylamino)uracil = 6,7-dimethyl-8-(1-D-ribityl)lumazine + phosphate + 2 H2O + H(+). Its pathway is cofactor biosynthesis; riboflavin biosynthesis; riboflavin from 2-hydroxy-3-oxobutyl phosphate and 5-amino-6-(D-ribitylamino)uracil: step 1/2. Functionally, catalyzes the formation of 6,7-dimethyl-8-ribityllumazine by condensation of 5-amino-6-(D-ribitylamino)uracil with 3,4-dihydroxy-2-butanone 4-phosphate. This is the penultimate step in the biosynthesis of riboflavin. In Limosilactobacillus reuteri (strain DSM 20016) (Lactobacillus reuteri), this protein is 6,7-dimethyl-8-ribityllumazine synthase.